Here is a 489-residue protein sequence, read N- to C-terminus: Endothelial zinc finger protein induced by tumor necrosis factor alpha (489 aa).

Over residues 1 to 15 (MKELDPKNDISEDKL) the composition is skewed to basic and acidic residues. Disordered regions lie at residues 1 to 61 (MKEL…PLGI) and 98 to 122 (EKGA…KPPM). 13 consecutive C2H2-type zinc fingers follow at residues 130-152 (YDCS…QRIH), 158-180 (FECD…QRVH), 186-208 (YACG…QRTH), 214-236 (YVCD…ERIH), 242-264 (YACG…QRTH), 270-292 (YVCP…QRTH), 298-320 (YACK…QRNH), 326-348 (YVCG…QRFH), 354-376 (FECS…QRIH), 382-404 (YECY…QIVH), 410-432 (YVCG…QRIH), 438-460 (YRCG…QRIH), and 466-488 (YRCG…LRIH).

This sequence belongs to the krueppel C2H2-type zinc-finger protein family. As to expression, highly expressed in placenta, followed by brain, testis, pancreas, heart, small intestine, muscle, uterus, prostate and peripheral blood leukocytes. Not detected in liver, lung, colon, stomach, salivary and thyroid gland.

It is found in the nucleus. Its function is as follows. May be involved in transcriptional regulation. The polypeptide is Endothelial zinc finger protein induced by tumor necrosis factor alpha (ZNF71) (Homo sapiens (Human)).